The sequence spans 400 residues: Serine/threonine-protein kinase AFC3 (400 aa).

Residues 1–29 (MIANGFESMDKERVRKRPRMTWDEAPAEP) are disordered. Residues 71–396 (YKILSKMGEG…ANEALDHPFF (326 aa)) form the Protein kinase domain. Residues 77-85 (MGEGTFGRV) and K100 contribute to the ATP site. Residue D196 is the Proton acceptor of the active site.

The protein belongs to the protein kinase superfamily. CMGC Ser/Thr protein kinase family. Lammer subfamily.

It catalyses the reaction L-seryl-[protein] + ATP = O-phospho-L-seryl-[protein] + ADP + H(+). It carries out the reaction L-threonyl-[protein] + ATP = O-phospho-L-threonyl-[protein] + ADP + H(+). The enzyme catalyses L-tyrosyl-[protein] + ATP = O-phospho-L-tyrosyl-[protein] + ADP + H(+). This is Serine/threonine-protein kinase AFC3 (AFC3) from Arabidopsis thaliana (Mouse-ear cress).